Reading from the N-terminus, the 395-residue chain is Cytoplasmic 60S subunit biogenesis factor REI1 homolog 2 (395 aa).

4 C2H2-type zinc fingers span residues 4–28 (LACNSCNKDFEDDAEQKFHYKSEWH), 68–92 (YSCGICNKGYRSSKAHEQHLKSKSH), 171–194 (ACCLMCDKKHKTIEKCMVHMHKFH), and 222–249 (FVCLYCNELCHPFSSLEAVRKHMDAKGH).

The protein belongs to the REI1 family. In terms of assembly, can form homodimer. Interacts with RLP24, RLP24A, RPL24B, EBP1 and JJJ1.

Its subcellular location is the cytoplasm. Its function is as follows. Pre-60S-associated factor involved in the cytoplasmic maturation of the 60S subunit. Involved in the dissociation and recycling of other late pre-60S factors before newly synthesized large ribosomal subunits enter translation. Can complement the growth defect of a yeast mutant lacking REI1. Required for leaf growth under cold temperature conditions. The sequence is that of Cytoplasmic 60S subunit biogenesis factor REI1 homolog 2 from Arabidopsis thaliana (Mouse-ear cress).